Reading from the N-terminus, the 347-residue chain is Phosphoribosylformylglycinamidine cyclo-ligase (347 aa).

The protein belongs to the AIR synthase family.

Its subcellular location is the cytoplasm. It carries out the reaction 2-formamido-N(1)-(5-O-phospho-beta-D-ribosyl)acetamidine + ATP = 5-amino-1-(5-phospho-beta-D-ribosyl)imidazole + ADP + phosphate + H(+). The protein operates within purine metabolism; IMP biosynthesis via de novo pathway; 5-amino-1-(5-phospho-D-ribosyl)imidazole from N(2)-formyl-N(1)-(5-phospho-D-ribosyl)glycinamide: step 2/2. The chain is Phosphoribosylformylglycinamidine cyclo-ligase from Bacillus cytotoxicus (strain DSM 22905 / CIP 110041 / 391-98 / NVH 391-98).